The chain runs to 180 residues: ATP synthase subunit delta (180 aa).

This sequence belongs to the ATPase delta chain family. F-type ATPases have 2 components, F(1) - the catalytic core - and F(0) - the membrane proton channel. F(1) has five subunits: alpha(3), beta(3), gamma(1), delta(1), epsilon(1). CF(0) has four main subunits: a(1), b(1), b'(1) and c(10-14). The alpha and beta chains form an alternating ring which encloses part of the gamma chain. F(1) is attached to F(0) by a central stalk formed by the gamma and epsilon chains, while a peripheral stalk is formed by the delta, b and b' chains.

It is found in the cellular thylakoid membrane. F(1)F(0) ATP synthase produces ATP from ADP in the presence of a proton or sodium gradient. F-type ATPases consist of two structural domains, F(1) containing the extramembraneous catalytic core and F(0) containing the membrane proton channel, linked together by a central stalk and a peripheral stalk. During catalysis, ATP synthesis in the catalytic domain of F(1) is coupled via a rotary mechanism of the central stalk subunits to proton translocation. Its function is as follows. This protein is part of the stalk that links CF(0) to CF(1). It either transmits conformational changes from CF(0) to CF(1) or is implicated in proton conduction. This is ATP synthase subunit delta from Prochlorococcus marinus subsp. pastoris (strain CCMP1986 / NIES-2087 / MED4).